The primary structure comprises 602 residues: Elongation factor 4 (602 aa).

Residues 8 to 189 (KNIRNFSIIA…KIITTIPAPS (182 aa)) form the tr-type G domain. GTP contacts are provided by residues 20–25 (DHGKST) and 136–139 (NKID).

The protein belongs to the TRAFAC class translation factor GTPase superfamily. Classic translation factor GTPase family. LepA subfamily.

It localises to the cell inner membrane. It carries out the reaction GTP + H2O = GDP + phosphate + H(+). Functionally, required for accurate and efficient protein synthesis under certain stress conditions. May act as a fidelity factor of the translation reaction, by catalyzing a one-codon backward translocation of tRNAs on improperly translocated ribosomes. Back-translocation proceeds from a post-translocation (POST) complex to a pre-translocation (PRE) complex, thus giving elongation factor G a second chance to translocate the tRNAs correctly. Binds to ribosomes in a GTP-dependent manner. The protein is Elongation factor 4 of Helicobacter pylori (strain G27).